Here is a 355-residue protein sequence, read N- to C-terminus: MLDRLNFIENKYEELSIKISDPTVMQDQKEWQKLCKEHSDMETIVTTYKEYKEVLQSIEDNKEMLKEDIEQELRDMVQEDIKELEQRVQELEQELKMLLVPKDPNDEKNVFIEIRAGAGGDEAALFAANLFRMYTRYAERHNWKTEAVSVNETDIGGFKEIVFMVRGKGAYSRLKYESGVHRVQRVPDTESSGRIHTSTATVAVLPEVEDVDVEINQNDLRVDVYRASGHGGQCVNTTDSAVRITHLPSGLVVTCQDEKSQLKNKEKAMKVLKSRLYDMLESERSASIAEDRKSQVGTGDRSERIRTYNYPQGRVTDHRIGLTLYKLESFLDGDIEEMIDGLITVEQSERMKDIS.

N5-methylglutamine is present on Gln233.

This sequence belongs to the prokaryotic/mitochondrial release factor family. Methylated by PrmC. Methylation increases the termination efficiency of RF1.

Its subcellular location is the cytoplasm. Functionally, peptide chain release factor 1 directs the termination of translation in response to the peptide chain termination codons UAG and UAA. The sequence is that of Peptide chain release factor 1 from Clostridium tetani (strain Massachusetts / E88).